The chain runs to 224 residues: Histone H1.03 (224 aa).

Low complexity-rich tracts occupy residues 1-22 and 30-42; these read MAET…AKAA and AAGG…PAGP. Disordered regions lie at residues 1 to 43 and 99 to 224; these read MAET…AGPS and QTKG…PKKK. One can recognise an H15 domain in the interval 40 to 113; the sequence is AGPSVTELIT…GASGSFRLSK (74 aa). 4 stretches are compositionally biased toward basic residues: residues 122 to 137, 145 to 162, 170 to 188, and 197 to 224; these read APKK…KPAA, KKPK…KAKK, KAAK…KKAV, and KAVK…PKKK.

This sequence belongs to the histone H1/H5 family.

It is found in the nucleus. The protein resides in the chromosome. Functionally, histones H1 are necessary for the condensation of nucleosome chains into higher-order structures. The chain is Histone H1.03 from Gallus gallus (Chicken).